The following is a 981-amino-acid chain: Ephrin type-A receptor 3 (981 aa).

A signal peptide spans 1 to 20 (MALFRIYSFLAPFHILVLCQ). Over 21-545 (ALRNYPDNEV…LAVGDPNQQT (525 aa)) the chain is Extracellular. The region spanning 29-210 (EVTLLDSMSA…FYKRCPLAVL (182 aa)) is the Eph LBD domain. 2 Fibronectin type-III domains span residues 328-441 (PPSA…TSQT) and 442-533 (VSVI…TSHE). Asparagine 340, asparagine 410, asparagine 435, and asparagine 485 each carry an N-linked (GlcNAc...) asparagine glycan. Residues 546 to 566 (ILAISVAGGAVLLVLLVACFI) traverse the membrane as a helical segment. Residues 567–981 (VSGRRCGYIK…QAHHGTQVQV (415 aa)) lie on the Cytoplasmic side of the membrane. Tyrosine 601 and tyrosine 607 each carry phosphotyrosine; by autocatalysis. One can recognise a Protein kinase domain in the interval 626 to 887 (IRIERVIGAG…QIVNTLDRLI (262 aa)). Residues 633-638 (GAGEFG), lysine 658, and 705-711 (EYMENGS) contribute to the ATP site. Tyrosine 706 carries the post-translational modification Phosphotyrosine; by autocatalysis. Residue aspartate 751 is the Proton acceptor of the active site. 755 to 756 (RN) contacts ATP. Phosphotyrosine; by autocatalysis is present on residues tyrosine 784 and tyrosine 927. In terms of domain architecture, SAM spans 910–974 (AAVNTVEDWL…LSSIQCLQAH (65 aa)). The short motif at 979 to 981 (VQV) is the PDZ-binding element.

The protein belongs to the protein kinase superfamily. Tyr protein kinase family. Ephrin receptor subfamily. In terms of assembly, heterotetramer upon binding of the ligand. The heterotetramer is composed of an ephrin dimer and a receptor dimer. Oligomerization is probably required to induce biological responses. In terms of processing, autophosphorylates upon activation by efna5. In terms of tissue distribution, widely expressed in the developing zebrafish nervous system.

It localises to the cell membrane. The enzyme catalyses L-tyrosyl-[protein] + ATP = O-phospho-L-tyrosyl-[protein] + ADP + H(+). Functionally, receptor tyrosine kinase which binds promiscuously membrane-bound ephrin family ligands residing on adjacent cells, leading to contact-dependent bidirectional signaling into neighboring cells. The signaling pathway downstream of the receptor is referred to as forward signaling while the signaling pathway downstream of the ephrin ligand is referred to as reverse signaling. Highly promiscuous for ephrin-A ligands it binds preferentially efna5. Upon activation by efna5 regulates cell-cell adhesion, cytoskeletal organization and cell migration. Plays a role in cardiac cells migration and differentiation probably through activation by efna1. Involved in the retinotectal mapping of neurons. May also control the segregation but not the guidance of motor and sensory axons during neuromuscular circuit development. The polypeptide is Ephrin type-A receptor 3 (epha3) (Danio rerio (Zebrafish)).